The primary structure comprises 984 residues: uncharacterized protein (984 aa).

This is an uncharacterized protein from Ostreid herpesvirus 1 (isolate France) (OsHV-1).